The following is a 574-amino-acid chain: Man(5)GlcNAc(2)-PP-dolichol translocation protein RFT1 (574 aa).

Over 1–24 (MAKKNSQLPSTSEQILERSTTGAT) the chain is Lumenal. Residues 25 to 45 (FLMMGQLFTKLVTFILNNLLI) form a helical membrane-spanning segment. Over 46–48 (RFL) the chain is Cytoplasmic. The chain crosses the membrane as a helical span at residues 49–69 (SPRIFGITAFLEFIQGTVLFF). At 70–110 (SRDAIRLSTLRISDSGNGIIDDDDEEEYQETHYKSKVLQTA) the chain is on the lumenal side. Residues 111–131 (VNFAYIPFWIGFPLSIGLIAW) traverse the membrane as a helical segment. At 132–148 (QYRNINAYFITLPFFRW) the chain is on the cytoplasmic side. Residues 149–169 (SIFLIWLSIIVELLSEPFFIV) traverse the membrane as a helical segment. At 170 to 181 (NQFMLNYAARSR) the chain is on the lumenal side. The helical transmembrane segment at 182–202 (FESIAVTTGCIVNFIVVYAVQ) threads the bilayer. At 203–218 (QSRYPMGVVTSDIDKE) the chain is on the cytoplasmic side. A helical membrane pass occupies residues 219 to 239 (GIAILAFALGKLAHSITLLAC). The Lumenal portion of the chain corresponds to 240-319 (YYWDYLKNFK…INSLCTVEEQ (80 aa)). Residues 320–340 (GIYALLSNYGSLLTRLLFAPI) form a helical membrane-spanning segment. Residues 341–372 (EESLRLFLARLLSSHNPKNLKLSIEVLVNLTR) are Cytoplasmic-facing. A helical membrane pass occupies residues 373-393 (FYIYLSLMIIVFGPANSSFLL). Topologically, residues 394 to 413 (QFLIGSKWSTTSVLDTIRVY) are lumenal. Residues 414 to 434 (CFYIPFLSLNGIFEAFFQSVA) traverse the membrane as a helical segment. Residues 435–443 (TGDQILKHS) are Cytoplasmic-facing. A helical transmembrane segment spans residues 444-464 (YFMMAFSGIFLLNSWLLIEKL). The Lumenal segment spans residues 465–469 (KLSIE). Residues 470–490 (GLILSNIINMVLRILYCGVFL) traverse the membrane as a helical segment. The Cytoplasmic portion of the chain corresponds to 491 to 509 (NKFHRELFTDSSFFFNFKD). The chain crosses the membrane as a helical span at residues 510–530 (FKTVIIAGSTICLLDWWFIGY). The Lumenal portion of the chain corresponds to 531–532 (VK). The helical transmembrane segment at 533–553 (NLQQFVVNVLFAMGLLALILV) threads the bilayer. Topologically, residues 554-574 (KERQTIQSFINKRAVSNSKDV) are cytoplasmic.

The protein belongs to the RFT1 family.

It is found in the endoplasmic reticulum membrane. Its pathway is protein modification; protein glycosylation. Its function is as follows. Intramembrane glycolipid transporter that operates in the biosynthetic pathway of dolichol-linked oligosaccharides, the glycan precursors employed in protein asparagine (N)-glycosylation. The sequential addition of sugars to dolichol pyrophosphate produces dolichol-linked oligosaccharides containing fourteen sugars, including two GlcNAcs, nine mannoses and three glucoses. Once assembled, the oligosaccharide is transferred from the lipid to nascent proteins by oligosaccharyltransferases. The assembly of dolichol-linked oligosaccharides begins on the cytosolic side of the endoplasmic reticulum membrane and finishes in its lumen. RFT1 could mediate the translocation of the cytosolically oriented intermediate DolPP-GlcNAc2Man5, produced by ALG11, into the ER lumen where dolichol-linked oligosaccharides assembly continues. However, the intramembrane lipid transporter activity could not be confirmed in vitro. This Saccharomyces cerevisiae (strain ATCC 204508 / S288c) (Baker's yeast) protein is Man(5)GlcNAc(2)-PP-dolichol translocation protein RFT1.